The following is an 84-amino-acid chain: Sulfur carrier protein TusA (84 aa).

The active-site Cysteine persulfide intermediate is the cysteine 19.

It belongs to the sulfur carrier protein TusA family. As to quaternary structure, interacts with IscS.

It is found in the cytoplasm. The protein operates within tRNA modification. In terms of biological role, sulfur carrier protein involved in sulfur trafficking in the cell. Part of a sulfur-relay system required for 2-thiolation during synthesis of 2-thiouridine of the modified wobble base 5-methylaminomethyl-2-thiouridine (mnm(5)s(2)U) in tRNA. Interacts with IscS and stimulates its cysteine desulfurase activity. Accepts an activated sulfur from IscS, which is then transferred to TusD, and thus determines the direction of sulfur flow from IscS to 2-thiouridine formation. Also appears to be involved in sulfur transfer for the biosynthesis of molybdopterin. The protein is Sulfur carrier protein TusA of Sodalis glossinidius (strain morsitans).